The chain runs to 226 residues: Phosphoglycolate phosphatase (226 aa).

D12 (nucleophile) is an active-site residue. 3 residues coordinate Mg(2+): D12, D14, and D177.

This sequence belongs to the HAD-like hydrolase superfamily. CbbY/CbbZ/Gph/YieH family. It depends on Mg(2+) as a cofactor.

The enzyme catalyses 2-phosphoglycolate + H2O = glycolate + phosphate. It participates in organic acid metabolism; glycolate biosynthesis; glycolate from 2-phosphoglycolate: step 1/1. Specifically catalyzes the dephosphorylation of 2-phosphoglycolate. Is involved in the dissimilation of the intracellular 2-phosphoglycolate formed during the DNA repair of 3'-phosphoglycolate ends, a major class of DNA lesions induced by oxidative stress. The polypeptide is Phosphoglycolate phosphatase (Colwellia psychrerythraea (strain 34H / ATCC BAA-681) (Vibrio psychroerythus)).